The chain runs to 353 residues: S-adenosylmethionine:tRNA ribosyltransferase-isomerase (353 aa).

It belongs to the QueA family. Monomer.

The protein resides in the cytoplasm. The enzyme catalyses 7-aminomethyl-7-carbaguanosine(34) in tRNA + S-adenosyl-L-methionine = epoxyqueuosine(34) in tRNA + adenine + L-methionine + 2 H(+). It participates in tRNA modification; tRNA-queuosine biosynthesis. Its function is as follows. Transfers and isomerizes the ribose moiety from AdoMet to the 7-aminomethyl group of 7-deazaguanine (preQ1-tRNA) to give epoxyqueuosine (oQ-tRNA). The chain is S-adenosylmethionine:tRNA ribosyltransferase-isomerase from Nitrosomonas europaea (strain ATCC 19718 / CIP 103999 / KCTC 2705 / NBRC 14298).